A 151-amino-acid polypeptide reads, in one-letter code: Probable transcriptional regulator syrB3 (151 aa).

Residues 1-65 (MVDESNAGPV…QERSEKLRLI (65 aa)) form a disordered region. A compositionally biased stretch (low complexity) spans 7 to 23 (AGPVAPAVVADAEVKAP). A compositionally biased stretch (basic and acidic residues) spans 52-65 (GYSEQERSEKLRLI).

Belongs to the SyrB family.

This chain is Probable transcriptional regulator syrB3 (syrB3), found in Rhizobium meliloti (strain 1021) (Ensifer meliloti).